The primary structure comprises 456 residues: UPF0496 protein 4 (456 aa).

The helical transmembrane segment at 205–221 (SVTVFVCSIFVAVLSGS) threads the bilayer.

This sequence belongs to the ROH1 family.

It is found in the membrane. This is UPF0496 protein 4 from Oryza sativa subsp. indica (Rice).